The sequence spans 285 residues: MSRNLGMRAKVLIKPLVLFQIIDSYERRPKGDNQVIGTLLGRNKEGHFEITNCFTVPHKEHPEINRIDLDIAYASEILELNMLTYPNERVLGWFCTGKSVSRSASLLHDYYARECGEVQPLHLVVDATLKSQRLSTRLYCAVEIGVPGGTKGLMFSLVPLEISNGNSDLVALRSIEKQSLQQGTKQLDRFIPELVQVVDATRDIQQRLDLVLRYIKDVLDRKRKPDNVVGRALHAALTAVPVMDPDKFRLMFNTNLRDMLMAITLSTMIKTQLEISEKLSCMQDQ.

The region spanning 11–145 is the MPN domain; the sequence is VLIKPLVLFQ…TRLYCAVEIG (135 aa).

The protein belongs to the eIF-3 subunit F family. As to quaternary structure, component of the eukaryotic translation initiation factor 3 (eIF-3) complex. The eIF-3 complex interacts with pix.

It localises to the cytoplasm. In terms of biological role, component of the eukaryotic translation initiation factor 3 (eIF-3) complex, which is involved in protein synthesis of a specialized repertoire of mRNAs and, together with other initiation factors, stimulates binding of mRNA and methionyl-tRNAi to the 40S ribosome. The eIF-3 complex specifically targets and initiates translation of a subset of mRNAs involved in cell proliferation. This chain is Eukaryotic translation initiation factor 3 subunit F-2, found in Drosophila erecta (Fruit fly).